The chain runs to 332 residues: Holliday junction branch migration complex subunit RuvB (332 aa).

Positions 1 to 181 (MSRILDNEIM…FGITGHMEYY (181 aa)) are large ATPase domain (RuvB-L). ATP-binding positions include L20, R21, G62, K65, T66, T67, 128 to 130 (EDF), R171, Y181, and R218. Mg(2+) is bound at residue T66. The small ATPAse domain (RuvB-S) stretch occupies residues 182–252 (AHADLTEIVE…ITDKALTMLD (71 aa)). The tract at residues 255-332 (HEGLDYVDQK…EHLGYEYSEK (78 aa)) is head domain (RuvB-H). Positions 291, 310, 312, and 315 each coordinate DNA.

This sequence belongs to the RuvB family. Homohexamer. Forms an RuvA(8)-RuvB(12)-Holliday junction (HJ) complex. HJ DNA is sandwiched between 2 RuvA tetramers; dsDNA enters through RuvA and exits via RuvB. An RuvB hexamer assembles on each DNA strand where it exits the tetramer. Each RuvB hexamer is contacted by two RuvA subunits (via domain III) on 2 adjacent RuvB subunits; this complex drives branch migration. In the full resolvosome a probable DNA-RuvA(4)-RuvB(12)-RuvC(2) complex forms which resolves the HJ.

It localises to the cytoplasm. It carries out the reaction ATP + H2O = ADP + phosphate + H(+). Functionally, the RuvA-RuvB-RuvC complex processes Holliday junction (HJ) DNA during genetic recombination and DNA repair, while the RuvA-RuvB complex plays an important role in the rescue of blocked DNA replication forks via replication fork reversal (RFR). RuvA specifically binds to HJ cruciform DNA, conferring on it an open structure. The RuvB hexamer acts as an ATP-dependent pump, pulling dsDNA into and through the RuvAB complex. RuvB forms 2 homohexamers on either side of HJ DNA bound by 1 or 2 RuvA tetramers; 4 subunits per hexamer contact DNA at a time. Coordinated motions by a converter formed by DNA-disengaged RuvB subunits stimulates ATP hydrolysis and nucleotide exchange. Immobilization of the converter enables RuvB to convert the ATP-contained energy into a lever motion, pulling 2 nucleotides of DNA out of the RuvA tetramer per ATP hydrolyzed, thus driving DNA branch migration. The RuvB motors rotate together with the DNA substrate, which together with the progressing nucleotide cycle form the mechanistic basis for DNA recombination by continuous HJ branch migration. Branch migration allows RuvC to scan DNA until it finds its consensus sequence, where it cleaves and resolves cruciform DNA. This chain is Holliday junction branch migration complex subunit RuvB, found in Streptococcus pneumoniae serotype 2 (strain D39 / NCTC 7466).